The sequence spans 216 residues: Peptide methionine sulfoxide reductase MsrA (216 aa).

The active site involves cysteine 54.

This sequence belongs to the MsrA Met sulfoxide reductase family.

It carries out the reaction L-methionyl-[protein] + [thioredoxin]-disulfide + H2O = L-methionyl-(S)-S-oxide-[protein] + [thioredoxin]-dithiol. The enzyme catalyses [thioredoxin]-disulfide + L-methionine + H2O = L-methionine (S)-S-oxide + [thioredoxin]-dithiol. Has an important function as a repair enzyme for proteins that have been inactivated by oxidation. Catalyzes the reversible oxidation-reduction of methionine sulfoxide in proteins to methionine. This Xanthomonas campestris pv. phaseoli protein is Peptide methionine sulfoxide reductase MsrA.